A 391-amino-acid polypeptide reads, in one-letter code: tRNA-specific 2-thiouridylase MnmA (391 aa).

Residues 35–42 (GLSGGVDS) and leucine 61 contribute to the ATP site. Catalysis depends on cysteine 122, which acts as the Nucleophile. Cysteine 122 and cysteine 221 are oxidised to a cystine. Glycine 147 serves as a coordination point for ATP. An interaction with tRNA region spans residues 171 to 173 (KDQ). Cysteine 221 serves as the catalytic Cysteine persulfide intermediate. The segment at 328–329 (RY) is interaction with tRNA.

The protein belongs to the MnmA/TRMU family.

It localises to the cytoplasm. The enzyme catalyses S-sulfanyl-L-cysteinyl-[protein] + uridine(34) in tRNA + AH2 + ATP = 2-thiouridine(34) in tRNA + L-cysteinyl-[protein] + A + AMP + diphosphate + H(+). Its function is as follows. Catalyzes the 2-thiolation of uridine at the wobble position (U34) of tRNA, leading to the formation of s(2)U34. In Synechococcus sp. (strain CC9311), this protein is tRNA-specific 2-thiouridylase MnmA.